The sequence spans 364 residues: 3'(2'),5'-bisphosphate nucleotidase 1 (364 aa).

D54 (proton acceptor) is an active-site residue. The Mg(2+) site is built by E77, D141, I143, and D144. The active-site Proton acceptor is the T146. 6 residues coordinate adenosine 3',5'-bisphosphate: T146, H243, S272, K275, R289, and D302. AMP contacts are provided by H243, S272, K275, R289, and D302. D302 contacts Mg(2+).

This sequence belongs to the inositol monophosphatase superfamily. The cofactor is Mg(2+).

It catalyses the reaction 3'-phosphoadenylyl sulfate + H2O = adenosine 5'-phosphosulfate + phosphate. The enzyme catalyses adenosine 3',5'-bisphosphate + H2O = AMP + phosphate. It carries out the reaction adenosine 2',5'-bisphosphate + H2O = AMP + phosphate. In terms of biological role, phosphatase that converts adenosine 3'-phosphate 5'-phosphosulfate (PAPS) to adenosine 5'-phosphosulfate (APS) and 3'(2')-phosphoadenosine 5'-phosphate (PAP) to AMP. Regulates the flux of sulfur in the sulfur-activation pathway by converting PAPS to APS. Involved in salt tolerance. The polypeptide is 3'(2'),5'-bisphosphate nucleotidase 1 (HAL21) (Candida albicans (strain WO-1) (Yeast)).